The chain runs to 475 residues: Bifunctional purple acid phosphatase 26 (475 aa).

The signal sequence occupies residues 1 to 30 (MNHLVIISVFLSSVLLLYRGESGITSSFIR). Residue Asn-103 is glycosylated (N-linked (GlcNAc...) asparagine). The Fe cation site is built by Asp-162, Asp-189, and Tyr-192. Asp-189 provides a ligand contact to Zn(2+). Residues Asn-227 and His-312 each coordinate Zn(2+). A substrate-binding site is contributed by Asn-227. His-322 acts as the Proton donor in catalysis. His-349 contributes to the Zn(2+) binding site. Position 349 to 351 (349 to 351 (HVH)) interacts with substrate. A Fe cation-binding site is contributed by His-351. 2 N-linked (GlcNAc...) asparagine glycosylation sites follow: Asn-365 and Asn-422.

It belongs to the metallophosphoesterase superfamily. Purple acid phosphatase family. Homodimer. Fe cation is required as a cofactor. Zn(2+) serves as cofactor. Post-translationally, glycosylated. Expressed in roots, stems, leaves, flowers and siliques.

The protein localises to the vacuole. The enzyme catalyses a phosphate monoester + H2O = an alcohol + phosphate. It carries out the reaction 2 a phenolic donor + H2O2 = 2 a phenolic radical donor + 2 H2O. Its activity is regulated as follows. Activated by Mg(2+), Co(2+), Mn(2+) and Ba(2+). Inhibited by Fe(2+), Cu(2+), Zn(2+), NaF, molybdate, arsenate, vanadate and inorganic phosphate. No effect of tartrate, Asp, Gln, glutathione, Asn, ascorbic acid and phosphite. Metallo-phosphoesterase involved in phosphate metabolism. Acid phosphatase activity with phosphoenolpyruvate, inorganic pyrophosphate, phenyl-phosphate and p-nitrophenyl-phosphate as the most effective substrates. No activity with phytic acid, phosphocholine or bis-p-nitrophenyl-phosphate. Has a peroxidase activity at alkaline pH. The sequence is that of Bifunctional purple acid phosphatase 26 (PAP26) from Arabidopsis thaliana (Mouse-ear cress).